A 331-amino-acid chain; its full sequence is Biotin synthase (331 aa).

A Radical SAM core domain is found at 51-278 (QTIQLSTLMS…KSYVRLSAGR (228 aa)). Positions 66, 70, and 73 each coordinate [4Fe-4S] cluster. [2Fe-2S] cluster is bound by residues C110, C141, C201, and R273.

Belongs to the radical SAM superfamily. Biotin synthase family. In terms of assembly, homodimer. The cofactor is [4Fe-4S] cluster. Requires [2Fe-2S] cluster as cofactor.

The enzyme catalyses (4R,5S)-dethiobiotin + (sulfur carrier)-SH + 2 reduced [2Fe-2S]-[ferredoxin] + 2 S-adenosyl-L-methionine = (sulfur carrier)-H + biotin + 2 5'-deoxyadenosine + 2 L-methionine + 2 oxidized [2Fe-2S]-[ferredoxin]. It functions in the pathway cofactor biosynthesis; biotin biosynthesis; biotin from 7,8-diaminononanoate: step 2/2. Catalyzes the conversion of dethiobiotin (DTB) to biotin by the insertion of a sulfur atom into dethiobiotin via a radical-based mechanism. The sequence is that of Biotin synthase from Histophilus somni (strain 129Pt) (Haemophilus somnus).